The primary structure comprises 590 residues: MPALRKHPQTATKHLFVTGGVVSSLGKGLTASSLGQLLTARGLQVTMQKLDPYLNVDPGTMNPFQHGEVFVTEDGAETDLDVGHYERFLDRNLSGSANVTTGQVYSSVIAKERRGEYLGDTVQVIPHITDEIKSRILAMAEPDAAGVRPDVVITEVGGTVGDIESLPFLEAARQVRHEVGRENCFFLHVSLVPYLAPSGELKTKPTQHSVAALRSIGITPDALILRCDRDVPEPLKNKIALMCDVDVDGVISTPDAPSIYDIPKVLHREELDAYVVRRLNLPFRDVDWTEWDDLLRRVHEPQETVRIALVGKYIDLSDAYLSVAEALRAGGFKHRAKVEMRWVASDDCETEHGAAAALSDVHGVLIPGGFGIRGIEGKIGAISYARKRGLPVLGLCLGLQCIVIEAARSVGITEANSAEFDPKTPDPVISTMADQRDAVAGEADLGGTMRLGAYPAVLTPNSVVAQAYQSTEVSERHRHRFEVNNAYRDRIAKSGLRFSGTSPDGHLVEFVEYDPQIHPFLVGTQAHPELKSRPTRPHPLFAAFIGAAIDYKAAERLPGMDLPEQFVPVEHSDADAPALEEPLEKSDVRG.

Residues 1–281 form an amidoligase domain region; it reads MPALRKHPQT…DAYVVRRLNL (281 aa). Position 23 (Ser-23) interacts with CTP. Ser-23 is a binding site for UTP. ATP-binding positions include 24 to 29 and Asp-81; that span reads SLGKGL. Mg(2+)-binding residues include Asp-81 and Glu-155. CTP-binding positions include 162-164, 202-207, and Lys-238; these read DIE and KTKPTQ. UTP-binding positions include 202 to 207 and Lys-238; that span reads KTKPTQ. Residues 306–554 enclose the Glutamine amidotransferase type-1 domain; that stretch reads RIALVGKYID…IGAAIDYKAA (249 aa). Gly-369 is an L-glutamine binding site. Cys-396 acts as the Nucleophile; for glutamine hydrolysis in catalysis. Residues 397-400, Glu-419, and Arg-480 each bind L-glutamine; that span reads LGLQ. Residues His-527 and Glu-529 contribute to the active site.

It belongs to the CTP synthase family. Homotetramer.

It carries out the reaction UTP + L-glutamine + ATP + H2O = CTP + L-glutamate + ADP + phosphate + 2 H(+). The enzyme catalyses L-glutamine + H2O = L-glutamate + NH4(+). The catalysed reaction is UTP + NH4(+) + ATP = CTP + ADP + phosphate + 2 H(+). It participates in pyrimidine metabolism; CTP biosynthesis via de novo pathway; CTP from UDP: step 2/2. Its activity is regulated as follows. Allosterically activated by GTP, when glutamine is the substrate; GTP has no effect on the reaction when ammonia is the substrate. The allosteric effector GTP functions by stabilizing the protein conformation that binds the tetrahedral intermediate(s) formed during glutamine hydrolysis. Inhibited by the product CTP, via allosteric rather than competitive inhibition. Its function is as follows. Catalyzes the ATP-dependent amination of UTP to CTP with either L-glutamine or ammonia as the source of nitrogen. Regulates intracellular CTP levels through interactions with the four ribonucleotide triphosphates. In Mycolicibacterium smegmatis (strain ATCC 700084 / mc(2)155) (Mycobacterium smegmatis), this protein is CTP synthase.